The following is an 87-amino-acid chain: Phosphoribosyl-ATP pyrophosphatase (87 aa).

The protein belongs to the PRA-PH family.

Its subcellular location is the cytoplasm. The catalysed reaction is 1-(5-phospho-beta-D-ribosyl)-ATP + H2O = 1-(5-phospho-beta-D-ribosyl)-5'-AMP + diphosphate + H(+). It participates in amino-acid biosynthesis; L-histidine biosynthesis; L-histidine from 5-phospho-alpha-D-ribose 1-diphosphate: step 2/9. This is Phosphoribosyl-ATP pyrophosphatase from Arthrobacter sp. (strain FB24).